Reading from the N-terminus, the 168-residue chain is Thioredoxin Y, chloroplastic (168 aa).

The N-terminal 58 residues, 1-58 (MAAFTSTTTAAAASPTPCRPAALVARSSAAPLRSAAPVVVAAGLRRAAAPSRRGATLR), are a transit peptide targeting the chloroplast. Residues 59–165 (VQAKKQTFSS…LIQQIESALE (107 aa)) enclose the Thioredoxin domain. Catalysis depends on nucleophile residues C89 and C92. Cysteines 89 and 92 form a disulfide.

It belongs to the thioredoxin family. Plant Y-type subfamily.

It is found in the plastid. Its subcellular location is the chloroplast. In terms of biological role, probable thiol-disulfide oxidoreductase that may participate in various redox reactions. In Oryza sativa subsp. japonica (Rice), this protein is Thioredoxin Y, chloroplastic.